A 677-amino-acid polypeptide reads, in one-letter code: Fermitin family homolog 1 (677 aa).

Residues M96–L653 form the FERM domain. A phosphoserine mark is found at S170, S179, and S361. The region spanning K377 to K473 is the PH domain.

The protein belongs to the kindlin family. Interacts with the cytoplasmic domain of integrins ITGB1 and ITGB3. In terms of tissue distribution, expressed in brain, skeletal muscle, kidney, colon, adrenal gland, prostate, and placenta. Weakly or not expressed in heart, thymus, spleen, liver, small intestine, bone marrow, lung and peripheral blood leukocytes. Overexpressed in some colon and lung tumors. In skin, it is localized within the epidermis and particularly in basal keratocytes. Not detected in epidermal melanocytes and dermal fibroblasts.

The protein resides in the cytoplasm. It localises to the cytoskeleton. Its subcellular location is the cell junction. The protein localises to the focal adhesion. It is found in the cell projection. The protein resides in the ruffle membrane. Functionally, involved in cell adhesion. Contributes to integrin activation. When coexpressed with talin, potentiates activation of ITGA2B. Required for normal keratinocyte proliferation. Required for normal polarization of basal keratinocytes in skin, and for normal cell shape. Required for normal adhesion of keratinocytes to fibronectin and laminin, and for normal keratinocyte migration to wound sites. May mediate TGF-beta 1 signaling in tumor progression. In Homo sapiens (Human), this protein is Fermitin family homolog 1 (FERMT1).